The sequence spans 81 residues: Sec-independent protein translocase protein TatA (81 aa).

Residues 1–21 traverse the membrane as a helical segment; it reads MGMPSGQELLIILAIVVLLFG. The disordered stretch occupies residues 45–81; the sequence is NEDDDTEVKSASTEAPKKVESAEEVASKESSKTPTQA. Basic and acidic residues predominate over residues 59–75; that stretch reads APKKVESAEEVASKESS.

The protein belongs to the TatA/E family. The Tat system comprises two distinct complexes: a TatABC complex, containing multiple copies of TatA, TatB and TatC subunits, and a separate TatA complex, containing only TatA subunits. Substrates initially bind to the TatABC complex, which probably triggers association of the separate TatA complex to form the active translocon.

It is found in the cell inner membrane. Functionally, part of the twin-arginine translocation (Tat) system that transports large folded proteins containing a characteristic twin-arginine motif in their signal peptide across membranes. TatA could form the protein-conducting channel of the Tat system. This Sulfurimonas denitrificans (strain ATCC 33889 / DSM 1251) (Thiomicrospira denitrificans (strain ATCC 33889 / DSM 1251)) protein is Sec-independent protein translocase protein TatA.